The primary structure comprises 285 residues: GPN-loop GTPase 3 (285 aa).

13-18 provides a ligand contact to GTP; sequence GSGKST. Residues 70 to 72 carry the Gly-Pro-Asn (GPN)-loop; involved in dimer interface motif; it reads GPN. Position 172 to 175 (172 to 175) interacts with GTP; sequence TKID. A disordered region spans residues 253-276; it reads GEDLEPKEPPLENDDDDDDDEGDE. A compositionally biased stretch (acidic residues) spans 263–275; the sequence is LENDDDDDDDEGD.

This sequence belongs to the GPN-loop GTPase family. Heterodimer with gpn1. Binds to RNA polymerase II (RNAPII).

Its function is as follows. Small GTPase required for proper localization of RNA polymerase II (RNAPII). May act at an RNAP assembly step prior to nuclear import. In Dictyostelium discoideum (Social amoeba), this protein is GPN-loop GTPase 3 (gpn3).